The following is an 828-amino-acid chain: Periplasmic nitrate reductase (828 aa).

The segment at residues 1-31 (MKLSRRSFMKANAVAAAAAAAGLSVPGVARA) is a signal peptide (tat-type signal). The 57-residue stretch at 39–95 (IKWDKAPCRFCGTGCGVLVGTQQGRVVACQGDPDAPVNRGLNCIKGYFLPKIMYGKD) folds into the 4Fe-4S Mo/W bis-MGD-type domain. [4Fe-4S] cluster is bound by residues C46, C49, C53, and C81. Residues K83, Q150, N175, C179, 212-219 (WGANMAEM), 243-247 (STYQH), 262-264 (QSD), M372, Q376, N482, 508-509 (SD), K531, D558, and 718-727 (TGRVLEHWHT) each bind Mo-bis(molybdopterin guanine dinucleotide). F794 provides a ligand contact to substrate. The Mo-bis(molybdopterin guanine dinucleotide) site is built by N802 and K819.

This sequence belongs to the prokaryotic molybdopterin-containing oxidoreductase family. NasA/NapA/NarB subfamily. In terms of assembly, component of the periplasmic nitrate reductase NapAB complex composed of NapA and NapB. The cofactor is [4Fe-4S] cluster. Mo-bis(molybdopterin guanine dinucleotide) serves as cofactor. Predicted to be exported by the Tat system. The position of the signal peptide cleavage has not been experimentally proven.

It localises to the periplasm. It catalyses the reaction 2 Fe(II)-[cytochrome] + nitrate + 2 H(+) = 2 Fe(III)-[cytochrome] + nitrite + H2O. Its function is as follows. Catalytic subunit of the periplasmic nitrate reductase complex NapAB. Receives electrons from NapB and catalyzes the reduction of nitrate to nitrite. This is Periplasmic nitrate reductase from Escherichia coli (strain K12 / MC4100 / BW2952).